The following is a 340-amino-acid chain: Putative methionyl-tRNA formyltransferase (340 aa).

The protein belongs to the Fmt family.

It is found in the mitochondrion. It localises to the mitochondrion matrix. The protein resides in the cytoplasm. The enzyme catalyses L-methionyl-tRNA(fMet) + (6R)-10-formyltetrahydrofolate = N-formyl-L-methionyl-tRNA(fMet) + (6S)-5,6,7,8-tetrahydrofolate + H(+). Its function is as follows. Formylates methionyl-tRNA in mitochondria and the cytoplasm. Responsible for the formylation of the N-terminally formylated (Nt-formylated) mitochondrial matrix proteins that are encoded by mitochondrial DNA. Nt-formylated proteins in the cytoplasm are strongly up-regulated in stationary phase or upon starvation for specific amino acids and are targeted for degradation by an E3 ubiquitin ligase-mediated fMet/N-end rule pathway. Increased Nt-formylation of cytosolic proteins appears to be important for adaptation to these stresses. The protein is Putative methionyl-tRNA formyltransferase (fmt1) of Schizosaccharomyces pombe (strain 972 / ATCC 24843) (Fission yeast).